Consider the following 543-residue polypeptide: Myotubularin-related protein 9-like (543 aa).

Residues 124–502 (AWHFHPPECY…QSLRLWQGLF (379 aa)) form the Myotubularin phosphatase domain.

The protein belongs to the protein-tyrosine phosphatase family. Non-receptor class myotubularin subfamily.

Probable pseudophosphatase. This chain is Myotubularin-related protein 9-like, found in Bos taurus (Bovine).